The following is a 114-amino-acid chain: Large ribosomal subunit protein uL22 (114 aa).

Belongs to the universal ribosomal protein uL22 family. In terms of assembly, part of the 50S ribosomal subunit.

In terms of biological role, this protein binds specifically to 23S rRNA; its binding is stimulated by other ribosomal proteins, e.g. L4, L17, and L20. It is important during the early stages of 50S assembly. It makes multiple contacts with different domains of the 23S rRNA in the assembled 50S subunit and ribosome. Its function is as follows. The globular domain of the protein is located near the polypeptide exit tunnel on the outside of the subunit, while an extended beta-hairpin is found that lines the wall of the exit tunnel in the center of the 70S ribosome. The chain is Large ribosomal subunit protein uL22 from Streptococcus mutans serotype c (strain ATCC 700610 / UA159).